A 351-amino-acid polypeptide reads, in one-letter code: Dihydroorotate dehydrogenase (quinone) (351 aa).

Residues 61 to 65 and Thr85 each bind FMN; that span reads AGLDK. A substrate-binding site is contributed by Lys65. Position 110 to 114 (110 to 114) interacts with substrate; sequence NRMGF. Residues Asn139 and Asn172 each contribute to the FMN site. A substrate-binding site is contributed by Asn172. Ser175 (nucleophile) is an active-site residue. Asn177 lines the substrate pocket. FMN contacts are provided by Lys217 and Thr245. 246–247 lines the substrate pocket; the sequence is NT. Residues Gly268, Gly297, and 318-319 each bind FMN; that span reads YS.

The protein belongs to the dihydroorotate dehydrogenase family. Type 2 subfamily. As to quaternary structure, monomer. The cofactor is FMN.

It localises to the cell membrane. The enzyme catalyses (S)-dihydroorotate + a quinone = orotate + a quinol. It functions in the pathway pyrimidine metabolism; UMP biosynthesis via de novo pathway; orotate from (S)-dihydroorotate (quinone route): step 1/1. In terms of biological role, catalyzes the conversion of dihydroorotate to orotate with quinone as electron acceptor. In Xanthomonas euvesicatoria pv. vesicatoria (strain 85-10) (Xanthomonas campestris pv. vesicatoria), this protein is Dihydroorotate dehydrogenase (quinone).